The sequence spans 250 residues: MSDLSGKTIIVTGGGSGIGRATVELLVASGANVAVADINDEAGEAVVAASGGKAAYFRCDIAQEEDVKALVAQTLAAFGGLDGAFNNAAIPQAGLPLAEVSLERFRQSMDINVTGTFLCMKYQILAMIERGTKGSIVNTASVAGVVGVPMHGEYVGAKHAVVGLTRVAAADYGKHGIRVNALVPGAVRTPMLQRAMDNDAGLEPYLNSIHPIGRFSEPHEQAQAAVWLLSDAASFVTGSCLAADGGFTAI.

Position 9 to 34 (9 to 34 (IIVTGGGSGIGRATVELLVASGANVA)) interacts with NAD(+). S141 provides a ligand contact to substrate. Y154 serves as the catalytic Proton acceptor.

The protein belongs to the short-chain dehydrogenases/reductases (SDR) family.

It catalyses the reaction 2,5-dichlorocyclohexa-2,5-dien-1,4-diol + NAD(+) = 2,5-dichlorohydroquinone + NADH + H(+). The protein operates within xenobiotic degradation; gamma-hexachlorocyclohexane degradation. Functionally, catalyzes the dehydrogenation of 2,5-dichloro-2,5-cyclohexadiene-1,4-diol (2,5-DDOL) to 2,5-dichlorohydroquinone (2,5-DCHQ), a step in the degradation of gamma-hexachlorocyclohexane (gamma-HCH or lindane). This Sphingobium indicum (strain DSM 16412 / CCM 7286 / MTCC 6364 / B90A) protein is 2,5-dichloro-2,5-cyclohexadiene-1,4-diol dehydrogenase.